The chain runs to 307 residues: Delta-9 acyl-lipid desaturase 2 (307 aa).

The segment covering M1–T17 has biased composition (polar residues). Residues M1–V21 form a disordered region. Residues L53–Y73 form a helical membrane-spanning segment. H85 and H90 together coordinate Fe cation. Positions H85 to H90 match the Histidine box-1 motif. Residues L99–V119 form a helical membrane-spanning segment. 3 residues coordinate Fe cation: H122, H125, and H126. The Histidine box-2 signature appears at H122–H126. The next 2 membrane-spanning stretches (helical) occupy residues V182 to V202 and W204 to C224. 4 residues coordinate Fe cation: H225, H254, H257, and H258. Positions H254–H258 match the Histidine box-3 motif.

It belongs to the fatty acid desaturase type 1 family. Requires Fe cation as cofactor. Strongly expressed in flowers, roots, leaves, seedpods, and inflorescence meristems.

It is found in the endoplasmic reticulum membrane. It catalyses the reaction a 1-hexacosanoyl-2-acyl-phosphoglycerolipid + 2 Fe(II)-[cytochrome b5] + O2 + 2 H(+) = a 1-[(17Z)-hexacos-17-enoyl]-2-acyl-phosphoglycerolipid + 2 Fe(III)-[cytochrome b5] + 2 H2O. The catalysed reaction is a 1-tetracosanoyl-2-acyl-phosphoglycerolipid + 2 Fe(II)-[cytochrome b5] + O2 + 2 H(+) = a 1-[(15Z)-tetracos-15-enoyl]-2-acyl-phosphoglycerolipid + 2 Fe(III)-[cytochrome b5] + 2 H2O. The protein operates within lipid metabolism; polyunsaturated fatty acid biosynthesis. Involved in delta-9 desaturation of fatty acids. Plays a role in the production of very-long-chain monounsaturated fatty acids (VLCMUFAs) in seed lipids and in membrane phospholipids and sphingolipids. Acts as C-16:0 desaturase for monogalactosyl diacylglycerol (MGDG) and phosphatidylglycerol (PG). Is an essential component for cold adaptation. Is essential to adjust the acyl composition of organelle membrane lipid composition in response to cold stress. This Arabidopsis thaliana (Mouse-ear cress) protein is Delta-9 acyl-lipid desaturase 2.